The following is a 388-amino-acid chain: Succinate--CoA ligase [ADP-forming] subunit beta (388 aa).

The region spanning Lys-9 to His-244 is the ATP-grasp domain. Residues Lys-46, Gly-53–Gly-55, Glu-99, Thr-102, and Glu-107 each bind ATP. Residues Asn-199 and Asp-213 each coordinate Mg(2+). Substrate-binding positions include Asn-264 and Gly-321 to Val-323.

Belongs to the succinate/malate CoA ligase beta subunit family. In terms of assembly, heterotetramer of two alpha and two beta subunits. Mg(2+) is required as a cofactor.

It carries out the reaction succinate + ATP + CoA = succinyl-CoA + ADP + phosphate. The catalysed reaction is GTP + succinate + CoA = succinyl-CoA + GDP + phosphate. Its pathway is carbohydrate metabolism; tricarboxylic acid cycle; succinate from succinyl-CoA (ligase route): step 1/1. Its function is as follows. Succinyl-CoA synthetase functions in the citric acid cycle (TCA), coupling the hydrolysis of succinyl-CoA to the synthesis of either ATP or GTP and thus represents the only step of substrate-level phosphorylation in the TCA. The beta subunit provides nucleotide specificity of the enzyme and binds the substrate succinate, while the binding sites for coenzyme A and phosphate are found in the alpha subunit. The polypeptide is Succinate--CoA ligase [ADP-forming] subunit beta (Aeromonas salmonicida (strain A449)).